Reading from the N-terminus, the 45-residue chain is C-phycocyanin beta subunit (45 aa).

This sequence belongs to the phycobiliprotein family. Heterodimer of an alpha and a beta subunit. The hererodimer further assembles into trimers and the trimers into hexamers. In terms of processing, contains two covalently linked bilin chromophores.

Its subcellular location is the cellular thylakoid membrane. Its function is as follows. Light-harvesting photosynthetic bile pigment-protein from the phycobiliprotein complex (phycobilisome, PBS). Phycocyanin is the major phycobiliprotein in the PBS rod. In Limnospira fusiformis (Arthrospira fusiformis), this protein is C-phycocyanin beta subunit (cpcB).